A 117-amino-acid polypeptide reads, in one-letter code: Large ribosomal subunit protein uL18 (117 aa).

This sequence belongs to the universal ribosomal protein uL18 family. As to quaternary structure, part of the 50S ribosomal subunit; part of the 5S rRNA/L5/L18/L25 subcomplex. Contacts the 5S and 23S rRNAs.

Its function is as follows. This is one of the proteins that bind and probably mediate the attachment of the 5S RNA into the large ribosomal subunit, where it forms part of the central protuberance. The protein is Large ribosomal subunit protein uL18 of Yersinia enterocolitica serotype O:8 / biotype 1B (strain NCTC 13174 / 8081).